The chain runs to 388 residues: Succinate--CoA ligase [ADP-forming] subunit beta (388 aa).

The region spanning 9 to 244 (KEIFRSMGVA…LEEEDPKEIE (236 aa)) is the ATP-grasp domain. Residues K46, 53–55 (GRG), E99, C102, and E107 contribute to the ATP site. Positions 199 and 213 each coordinate Mg(2+). Substrate contacts are provided by residues N264 and 321-323 (GIM).

Belongs to the succinate/malate CoA ligase beta subunit family. As to quaternary structure, heterotetramer of two alpha and two beta subunits. Requires Mg(2+) as cofactor.

It catalyses the reaction succinate + ATP + CoA = succinyl-CoA + ADP + phosphate. It carries out the reaction GTP + succinate + CoA = succinyl-CoA + GDP + phosphate. It participates in carbohydrate metabolism; tricarboxylic acid cycle; succinate from succinyl-CoA (ligase route): step 1/1. Its function is as follows. Succinyl-CoA synthetase functions in the citric acid cycle (TCA), coupling the hydrolysis of succinyl-CoA to the synthesis of either ATP or GTP and thus represents the only step of substrate-level phosphorylation in the TCA. The beta subunit provides nucleotide specificity of the enzyme and binds the substrate succinate, while the binding sites for coenzyme A and phosphate are found in the alpha subunit. This chain is Succinate--CoA ligase [ADP-forming] subunit beta, found in Staphylococcus aureus (strain MRSA252).